The primary structure comprises 301 residues: MKIGILSQFPQLYSTQRLVAACESRGHEAVVINTLNCYMNINSIKPSIHYEGQELVGFDAIIPRIHASVTFYGCAVVRQFEMMGVFVANDSISIARSRDKLRALQLLSRKGIGMPITGFANKPNDIPDLINMVGGAPLVIKLLEGTQGIGVVLAETKTAAESVIEAFLGLKANILVQEYIKESNGSDIRCFVVGDKVVASMKRQGPEGDFRSNLHLGGCGETVKITSVERKMAIAAVKAMGLVVAGVDILRSNRGPLILEVNSAPGIEGIEQTTGISVTEPIVEYIEKMVAARKTNRPIIA.

The region spanning 104-287 is the ATP-grasp domain; that stretch reads LQLLSRKGIG…VTEPIVEYIE (184 aa). ATP is bound by residues Lys141, 178-179, Asp187, and 211-213; these read EY and RSN. Mg(2+) contacts are provided by Asp248, Glu260, and Asn262. Residues Asp248, Glu260, and Asn262 each coordinate Mn(2+).

Belongs to the RimK family. The cofactor is Mg(2+). Mn(2+) serves as cofactor.

This is Probable alpha-L-glutamate ligase 1 from Shewanella sp. (strain W3-18-1).